A 345-amino-acid chain; its full sequence is Beta-2-glycoprotein 1 (345 aa).

The N-terminal stretch at Met-1–Ala-19 is a signal peptide. Sushi domains lie at Arg-21–Pro-81, Arg-82–Pro-139, Ile-140–Glu-202, and Val-203–Ala-262. Intrachain disulfides connect Cys-23–Cys-66, Cys-51–Cys-79, Cys-84–Cys-124, Cys-110–Cys-137, Cys-142–Cys-188, Cys-174–Cys-200, Cys-205–Cys-248, Cys-234–Cys-260, Cys-264–Cys-315, Cys-300–Cys-325, and Cys-307–Cys-345. The O-linked (GalNAc...) threonine glycan is linked to Thr-33. An O-linked (GalNAc...) threonine glycan is attached at Thr-149. Asn-162, Asn-183, and Asn-193 each carry an N-linked (GlcNAc...) asparagine glycan. N-linked (GlcNAc...) asparagine glycosylation occurs at Asn-253. The segment at Ser-263–Cys-345 is sushi-like.

As to expression, expressed by the liver and secreted in plasma.

The protein resides in the secreted. Functionally, binds to various kinds of negatively charged substances such as heparin, phospholipids, and dextran sulfate. May prevent activation of the intrinsic blood coagulation cascade by binding to phospholipids on the surface of damaged cells. In Pan troglodytes (Chimpanzee), this protein is Beta-2-glycoprotein 1 (APOH).